Consider the following 1162-residue polypeptide: DNA-directed RNA polymerase subunit beta 1 (1162 aa).

It belongs to the RNA polymerase beta chain family. The RNAP catalytic core consists of 2 alpha, 1 beta, 1 beta' and 1 omega subunit. When a sigma factor is associated with the core the holoenzyme is formed, which can initiate transcription.

It catalyses the reaction RNA(n) + a ribonucleoside 5'-triphosphate = RNA(n+1) + diphosphate. Its function is as follows. DNA-dependent RNA polymerase catalyzes the transcription of DNA into RNA using the four ribonucleoside triphosphates as substrates. The polypeptide is DNA-directed RNA polymerase subunit beta 1 (Nocardia farcinica (strain IFM 10152)).